A 1304-amino-acid polypeptide reads, in one-letter code: DNA-directed RNA polymerase subunit beta' (1304 aa).

Zn(2+) contacts are provided by Cys60, Cys62, Cys75, and Cys78. The Mg(2+) site is built by Asp541, Asp543, and Asp545. Zn(2+) contacts are provided by Cys887, Cys963, Cys970, and Cys973.

Belongs to the RNA polymerase beta' chain family. The RNAP catalytic core consists of 2 alpha, 1 beta, 1 beta' and 1 omega subunit. When a sigma factor is associated with the core the holoenzyme is formed, which can initiate transcription. It depends on Mg(2+) as a cofactor. Zn(2+) serves as cofactor.

It catalyses the reaction RNA(n) + a ribonucleoside 5'-triphosphate = RNA(n+1) + diphosphate. Its function is as follows. DNA-dependent RNA polymerase catalyzes the transcription of DNA into RNA using the four ribonucleoside triphosphates as substrates. The chain is DNA-directed RNA polymerase subunit beta' from Acidothermus cellulolyticus (strain ATCC 43068 / DSM 8971 / 11B).